Consider the following 190-residue polypeptide: MAMLTISLLLCAAVALNGATVLELFQDFEQALHLGAKGEDERVVAAENRNQCPTGWFQFGSRCFMFVETARSWPLAERHCVSLGANLASVHSSAEYQFLQEVVASKTGGFSTPWIGGFDAVQDRLWFWSDGSEFDYQNWKKGEPNNSGGREPCIVINWRDEYRWNDINCGNSFPSGVLQKNVEIQKNEPT.

The signal sequence occupies residues 1–18 (MAMLTISLLLCAAVALNG). The C-type lectin domain maps to 60–179 (GSRCFMFVET…GNSFPSGVLQ (120 aa)). The cysteines at positions 153 and 169 are disulfide-linked.

As to quaternary structure, multimeric. Expressed in cells of the branchial epithelium, hepatic sinusoids, biliary epithelium, renal interstitium, skin, and sub-mucosal granular layer of the intestine. Highly expressed in caudal kidney. Moderately expressed in liver. Weakly expressed in gill, spleen, cranial kidney and skin. Isoform 1 is highly expressed in intestine. Isoform 2 is weakly expressed in intestine.

Lectin that binds sepharose in a calcium-dependent manner. In Oncorhynchus mykiss (Rainbow trout), this protein is Ladderlectin.